A 745-amino-acid chain; its full sequence is Exocyst complex component 3 (745 aa).

Lys-28 bears the N6-acetyllysine mark.

The protein belongs to the SEC6 family. The exocyst complex is composed of EXOC1, EXOC2, EXOC3, EXOC4, EXOC5, EXOC6, EXOC7 and EXOC8. Interacts with EXOC3L1. Interacts with BIRC6/bruce. Interacts with MYRIP. Interacts with SLC6A9. As to expression, expressed in epididymis (at protein level).

The protein localises to the cytoplasm. Its subcellular location is the perinuclear region. It is found in the cell projection. The protein resides in the growth cone. It localises to the midbody. The protein localises to the golgi apparatus. Its subcellular location is the neuron projection. Functionally, component of the exocyst complex involved in the docking of exocytic vesicles with fusion sites on the plasma membrane. In Homo sapiens (Human), this protein is Exocyst complex component 3 (EXOC3).